A 396-amino-acid chain; its full sequence is uncharacterized protein (396 aa).

The protein belongs to the NAD(P)-dependent epimerase/dehydratase family. It depends on NAD(+) as a cofactor. Requires NADP(+) as cofactor.

In terms of biological role, putative nucleotide sugar epimerase/dehydrogenase. This is an uncharacterized protein from Sinorhizobium fredii (strain NBRC 101917 / NGR234).